We begin with the raw amino-acid sequence, 168 residues long: SsrA-binding protein (168 aa).

The protein belongs to the SmpB family.

The protein localises to the cytoplasm. Functionally, required for rescue of stalled ribosomes mediated by trans-translation. Binds to transfer-messenger RNA (tmRNA), required for stable association of tmRNA with ribosomes. tmRNA and SmpB together mimic tRNA shape, replacing the anticodon stem-loop with SmpB. tmRNA is encoded by the ssrA gene; the 2 termini fold to resemble tRNA(Ala) and it encodes a 'tag peptide', a short internal open reading frame. During trans-translation Ala-aminoacylated tmRNA acts like a tRNA, entering the A-site of stalled ribosomes, displacing the stalled mRNA. The ribosome then switches to translate the ORF on the tmRNA; the nascent peptide is terminated with the 'tag peptide' encoded by the tmRNA and targeted for degradation. The ribosome is freed to recommence translation, which seems to be the essential function of trans-translation. This Mycobacterium sp. (strain JLS) protein is SsrA-binding protein.